The primary structure comprises 468 residues: Cysteine--tRNA ligase (468 aa).

C33 is a binding site for Zn(2+). The 'HIGH' region signature appears at 35–45 (ATVQGLPHIGH). Positions 211, 236, and 240 each coordinate Zn(2+). Residues 267 to 271 (KMSKS) carry the 'KMSKS' region motif. Residue K270 participates in ATP binding.

Belongs to the class-I aminoacyl-tRNA synthetase family. In terms of assembly, monomer. Zn(2+) serves as cofactor.

Its subcellular location is the cytoplasm. It catalyses the reaction tRNA(Cys) + L-cysteine + ATP = L-cysteinyl-tRNA(Cys) + AMP + diphosphate. The protein is Cysteine--tRNA ligase of Mycolicibacterium paratuberculosis (strain ATCC BAA-968 / K-10) (Mycobacterium paratuberculosis).